A 147-amino-acid polypeptide reads, in one-letter code: Nucleoside diphosphate kinase (147 aa).

ATP-binding residues include lysine 11, phenylalanine 59, arginine 87, threonine 93, arginine 104, and asparagine 114. Catalysis depends on histidine 117, which acts as the Pros-phosphohistidine intermediate.

Belongs to the NDK family. In terms of assembly, homotetramer. Requires Mg(2+) as cofactor.

It localises to the cytoplasm. It catalyses the reaction a 2'-deoxyribonucleoside 5'-diphosphate + ATP = a 2'-deoxyribonucleoside 5'-triphosphate + ADP. It carries out the reaction a ribonucleoside 5'-diphosphate + ATP = a ribonucleoside 5'-triphosphate + ADP. Functionally, major role in the synthesis of nucleoside triphosphates other than ATP. The ATP gamma phosphate is transferred to the NDP beta phosphate via a ping-pong mechanism, using a phosphorylated active-site intermediate. This Anaeromyxobacter dehalogenans (strain 2CP-C) protein is Nucleoside diphosphate kinase.